A 459-amino-acid chain; its full sequence is Siroheme synthase 2 (459 aa).

Residues 1–204 form a precorrin-2 dehydrogenase /sirohydrochlorin ferrochelatase region; the sequence is MDYLPIFCQL…EDRERVQQLT (204 aa). Residues 22–23 and 43–44 contribute to the NAD(+) site; these read EI and LD. At S128 the chain carries Phosphoserine. A uroporphyrinogen-III C-methyltransferase region spans residues 216 to 459; it reads GEVTLVGAGP…KLSWFSDQTA (244 aa). P225 contributes to the S-adenosyl-L-methionine binding site. The active-site Proton acceptor is D248. K270 functions as the Proton donor in the catalytic mechanism. Residues 301-303, I306, 331-332, M382, and G411 contribute to the S-adenosyl-L-methionine site; these read GGD and TA.

In the N-terminal section; belongs to the precorrin-2 dehydrogenase / sirohydrochlorin ferrochelatase family. This sequence in the C-terminal section; belongs to the precorrin methyltransferase family.

It carries out the reaction uroporphyrinogen III + 2 S-adenosyl-L-methionine = precorrin-2 + 2 S-adenosyl-L-homocysteine + H(+). The enzyme catalyses precorrin-2 + NAD(+) = sirohydrochlorin + NADH + 2 H(+). It catalyses the reaction siroheme + 2 H(+) = sirohydrochlorin + Fe(2+). It functions in the pathway cofactor biosynthesis; adenosylcobalamin biosynthesis; precorrin-2 from uroporphyrinogen III: step 1/1. It participates in cofactor biosynthesis; adenosylcobalamin biosynthesis; sirohydrochlorin from precorrin-2: step 1/1. The protein operates within porphyrin-containing compound metabolism; siroheme biosynthesis; precorrin-2 from uroporphyrinogen III: step 1/1. Its pathway is porphyrin-containing compound metabolism; siroheme biosynthesis; siroheme from sirohydrochlorin: step 1/1. It functions in the pathway porphyrin-containing compound metabolism; siroheme biosynthesis; sirohydrochlorin from precorrin-2: step 1/1. Its function is as follows. Multifunctional enzyme that catalyzes the SAM-dependent methylations of uroporphyrinogen III at position C-2 and C-7 to form precorrin-2 via precorrin-1. Then it catalyzes the NAD-dependent ring dehydrogenation of precorrin-2 to yield sirohydrochlorin. Finally, it catalyzes the ferrochelation of sirohydrochlorin to yield siroheme. The protein is Siroheme synthase 2 of Pectobacterium atrosepticum (strain SCRI 1043 / ATCC BAA-672) (Erwinia carotovora subsp. atroseptica).